A 37-amino-acid chain; its full sequence is Large ribosomal subunit protein bL36 (37 aa).

This sequence belongs to the bacterial ribosomal protein bL36 family.

This is Large ribosomal subunit protein bL36 from Shewanella woodyi (strain ATCC 51908 / MS32).